Consider the following 246-residue polypeptide: Transcription factor A, mitochondrial (246 aa).

A mitochondrion-targeting transit peptide spans 1–42 (MALLRGVWGVLNALGKSGADLCAGCGSRLRYPFSFAYVPKWF). The segment at residues 50–118 (PKKPMTSYVR…VYKEEINRIQ (69 aa)) is a DNA-binding region (HMG box 1). Residues serine 56 and serine 61 each carry the phosphoserine; by PKA modification. Threonine 122 carries the post-translational modification Phosphothreonine. The HMG box 2 DNA-binding region spans 155–219 (PKRPRSAYNI…RYYNEMKSWE (65 aa)). Residue serine 160 is modified to Phosphoserine; by PKA. Serine 193 and serine 195 each carry phosphoserine.

As to quaternary structure, monomer; binds DNA as a monomer. Homodimer. Component of the mitochondrial transcription initiation complex, composed at least of TFB2M, TFAM and POLRMT. In this complex TFAM recruits POLRMT to the promoter whereas TFB2M induces structural changes in POLRMT to enable promoter opening and trapping of the DNA non-template strand. Upon metabolic stress, forms a complex composed of FOXO3, SIRT3, TFAM and POLRMT. Interacts with TFB1M and TFB2M. Interacts with CLPX; this enhances DNA-binding. Phosphorylation by PKA within the HMG box 1 impairs DNA binding and promotes degradation by the AAA+ Lon protease.

The protein resides in the mitochondrion. The protein localises to the mitochondrion matrix. It localises to the mitochondrion nucleoid. Functionally, binds to the mitochondrial light strand promoter and functions in mitochondrial transcription regulation. Component of the mitochondrial transcription initiation complex, composed at least of TFB2M, TFAM and POLRMT that is required for basal transcription of mitochondrial DNA. In this complex, TFAM recruits POLRMT to a specific promoter whereas TFB2M induces structural changes in POLRMT to enable promoter opening and trapping of the DNA non-template strand. Required for accurate and efficient promoter recognition by the mitochondrial RNA polymerase. Promotes transcription initiation from the HSP1 and the light strand promoter by binding immediately upstream of transcriptional start sites. Is able to unwind DNA. Bends the mitochondrial light strand promoter DNA into a U-turn shape via its HMG boxes. Required for maintenance of normal levels of mitochondrial DNA. May play a role in organizing and compacting mitochondrial DNA. The chain is Transcription factor A, mitochondrial from Bos taurus (Bovine).